The following is a 653-amino-acid chain: Aspartate--tRNA ligase, mitochondrial (653 aa).

The N-terminal 46 residues, 1–46 (MYLGFWLSRLCRGLSRPIGKTMRPIWGSLSRNLALSSQRIPEFSSF), are a transit peptide targeting the mitochondrion. Thr-218 carries the phosphothreonine modification. Ser-241 bears the Phosphoserine mark. Residues 243-246 (QQFK) are aspartate. Residue Arg-265 participates in L-aspartate binding. Residues 265–267 (RDE) and Glu-534 each bind ATP. Arg-541 serves as a coordination point for L-aspartate. 583-586 (GLDR) contacts ATP.

Belongs to the class-II aminoacyl-tRNA synthetase family. Type 1 subfamily. As to quaternary structure, homodimer.

It is found in the mitochondrion matrix. It localises to the mitochondrion membrane. It catalyses the reaction tRNA(Asp) + L-aspartate + ATP = L-aspartyl-tRNA(Asp) + AMP + diphosphate. In terms of biological role, catalyzes the attachment of aspartate to tRNA(Asp) in a two-step reaction: aspartate is first activated by ATP to form Asp-AMP and then transferred to the acceptor end of tRNA(Asp). This is Aspartate--tRNA ligase, mitochondrial (Dars2) from Mus musculus (Mouse).